Consider the following 259-residue polypeptide: Probable transcriptional regulatory protein Noca_2383 (259 aa).

This sequence belongs to the TACO1 family.

The protein resides in the cytoplasm. In Nocardioides sp. (strain ATCC BAA-499 / JS614), this protein is Probable transcriptional regulatory protein Noca_2383.